Consider the following 197-residue polypeptide: Probable UbiX-like flavin prenyltransferase (197 aa).

FMN contacts are provided by residues 9–11 (GAT), serine 36, 87–90 (SMKT), and arginine 122.

The protein belongs to the UbiX/PAD1 family. YclB subfamily. Homododecamer.

It carries out the reaction dimethylallyl phosphate + FMNH2 = prenylated FMNH2 + phosphate. Its function is as follows. Involved in the non-oxidative decarboxylation and detoxification of phenolic derivatives under both aerobic and anaerobic conditions. Flavin prenyltransferase that catalyzes the synthesis of the prenylated FMN cofactor (prenyl-FMN) for phenolic acid decarboxylase. This chain is Probable UbiX-like flavin prenyltransferase, found in Escherichia coli O157:H7.